The following is an 88-amino-acid chain: Small ribosomal subunit protein uS19 (88 aa).

Belongs to the universal ribosomal protein uS19 family.

Functionally, protein S19 forms a complex with S13 that binds strongly to the 16S ribosomal RNA. This is Small ribosomal subunit protein uS19 from Ureaplasma parvum serovar 3 (strain ATCC 27815 / 27 / NCTC 11736).